A 225-amino-acid chain; its full sequence is Lectin (225 aa).

In terms of assembly, homotetramer.

Functionally, chitin-binding lectin. Agglutinates rabbit erythrocytes, but not human erythrocytes. In Vachellia farnesiana (Sweet acacia), this protein is Lectin.